Reading from the N-terminus, the 465-residue chain is Chaperone protein dnaJ C76, chloroplastic (465 aa).

The N-terminal 38 residues, 1-38 (MTPAIFSPTTLPPSTATWPCSTSQKLITVRSPLKFKCR), are a transit peptide targeting the chloroplast. The 64-residue stretch at 50-113 (DLYDLLGIDR…ISRQAYDKEQ (64 aa)) folds into the J domain. Positions 346-385 (AALPSSGNNNGSKASSNPQVTRKTFPSEEKPTSRRENRRQ) are disordered. Positions 350–362 (SSGNNNGSKASSN) are enriched in low complexity. A compositionally biased stretch (basic and acidic residues) spans 370–384 (FPSEEKPTSRRENRR).

This sequence belongs to the DnaJ family. In terms of tissue distribution, expressed in roots, exclusively in the stele.

Its subcellular location is the plastid. The protein localises to the chloroplast. Its function is as follows. May function together with HSC70 chaperone to assist protein folding and prevent protein aggregation during salt stress in the chloroplast. Involved in root development. Required for the position-dependent cell fate determination during root hair development. This is Chaperone protein dnaJ C76, chloroplastic from Arabidopsis thaliana (Mouse-ear cress).